The chain runs to 380 residues: Geranylgeranyl pyrophosphate synthase cle6 (380 aa).

The segment covering methionine 1–methionine 19 has biased composition (low complexity). The disordered stretch occupies residues methionine 1 to glutamine 55. Polar residues predominate over residues histidine 45 to glutamine 55. Positions 102, 105, and 134 each coordinate isopentenyl diphosphate. Mg(2+)-binding residues include aspartate 141 and aspartate 145. Arginine 150 serves as a coordination point for dimethylallyl diphosphate. Arginine 151 serves as a coordination point for isopentenyl diphosphate. Dimethylallyl diphosphate contacts are provided by lysine 229, threonine 230, and glutamine 263. Aspartate 266 is a binding site for Mg(2+). Dimethylallyl diphosphate contacts are provided by asparagine 270, lysine 280, and lysine 290.

Belongs to the FPP/GGPP synthase family. It depends on Mg(2+) as a cofactor.

The enzyme catalyses isopentenyl diphosphate + dimethylallyl diphosphate = (2E)-geranyl diphosphate + diphosphate. The catalysed reaction is isopentenyl diphosphate + (2E)-geranyl diphosphate = (2E,6E)-farnesyl diphosphate + diphosphate. It carries out the reaction isopentenyl diphosphate + (2E,6E)-farnesyl diphosphate = (2E,6E,10E)-geranylgeranyl diphosphate + diphosphate. The protein operates within secondary metabolite biosynthesis; terpenoid biosynthesis. Its function is as follows. Geranylgeranyl pyrophosphate synthase; part of the cluster A that mediates the biosynthesis of chevalone E and its oxidized derivatives that possess a unique five-membered lactone ring and can synergistically enhance the cytotoxicity of doxorubicin (DOX) in breast cancer cells. Within the pathway, cle6 takes part to the biosynthesis of the molecular scaffold by providing geranylgeranyl pyrophosphate (GGPP) to the prenyltransferase cle5 for C-3 geranylgeranylation of triacetic acid lactone. The molecular scaffold is commonly biosynthesized by a series of enzymes including the non-reducing polyketide synthase (NR-PKS) cle1 that produces the alpha-pyrone triacetic acid lactone (TAL); The membrane-bound prenyltransferase cle5 that accepts TAL as its substrate to perform a C-3 geranylgeranylation reaction, in which the pathway-dedicated GGPS cle6 is required to provide GGPP, the other substrate of cle5; the FAD-dependent monooxygenase Cle3 that forms an (S)-epoxide ring at the terminal olefin of the geranylgeranyl group; and the terpene cyclase Cle7 that catalyzes the cyclization of the prenyl group that yields the pentacyclic pathway intermediate chevalone E. Chevalone E can derivatize into seven new oxidized analogs by the cytochrome P450 monooxygenases cle2 (acting at C-20) and cle4 (acting at C-11 and C-12). The protein is Geranylgeranyl pyrophosphate synthase cle6 of Aspergillus versicolor.